Reading from the N-terminus, the 238-residue chain is Uridylate kinase (238 aa).

12–15 is a binding site for ATP; that stretch reads KLSG. Glycine 54 is a UMP binding site. Residues glycine 55 and arginine 59 each contribute to the ATP site. Residues aspartate 74 and 135-142 each bind UMP; that span reads TGNPFFTT. Positions 162, 163, 168, and 171 each coordinate ATP.

Belongs to the UMP kinase family. In terms of assembly, homohexamer.

The protein resides in the cytoplasm. The enzyme catalyses UMP + ATP = UDP + ADP. It functions in the pathway pyrimidine metabolism; CTP biosynthesis via de novo pathway; UDP from UMP (UMPK route): step 1/1. Inhibited by UTP. In terms of biological role, catalyzes the reversible phosphorylation of UMP to UDP. The sequence is that of Uridylate kinase from Rhodopseudomonas palustris (strain BisA53).